The sequence spans 142 residues: Hemoglobin subunit alpha (142 aa).

A Globin domain is found at 2–142 (VLSPADKTNI…VSTVLTSKYR (141 aa)). S4 is subject to Phosphoserine. The residue at position 8 (K8) is an N6-succinyllysine. T9 bears the Phosphothreonine mark. K12 is subject to N6-succinyllysine. Residue K17 is modified to N6-acetyllysine; alternate. Residue K17 is modified to N6-succinyllysine; alternate. Residue Y25 is modified to Phosphotyrosine. The residue at position 36 (S36) is a Phosphoserine. K41 carries the post-translational modification N6-succinyllysine. The residue at position 50 (S50) is a Phosphoserine. H59 contributes to the O2 binding site. H88 is a heme b binding site. Residue S103 is modified to Phosphoserine. At T109 the chain carries Phosphothreonine. S125 is subject to Phosphoserine. T135 and T138 each carry phosphothreonine. At S139 the chain carries Phosphoserine.

This sequence belongs to the globin family. In terms of assembly, heterotetramer of two alpha chains and two beta chains. Red blood cells.

Involved in oxygen transport from the lung to the various peripheral tissues. Its function is as follows. Hemopressin acts as an antagonist peptide of the cannabinoid receptor CNR1. Hemopressin-binding efficiently blocks cannabinoid receptor CNR1 and subsequent signaling. This Canis latrans (Coyote) protein is Hemoglobin subunit alpha (HBA).